The primary structure comprises 226 residues: MSFFGKMFGGKKEVAPTTGEAIQKLRETENMLIKKQEFLEAKIEDELNIARKNASKNKRVALQALKKKKRLEKQLQQIDGTLSTIEMQREALESANTNTAVLTTMKNAADALKRAHQNMDVDKVHDMMDDIAEQQDVAREISDAISNPVAFGADLDDEDLERELDELEQENFDKEIIGIPEPTPTLPEAPTEDLPEKAKEKKKATTTTAVEDDDDPDMKQLLSWSN.

A coiled-coil region spans residues Ile22–Gln88. The tract at residues Gln169–Asn226 is disordered.

It belongs to the SNF7 family. As to quaternary structure, homopolymer; forms elongated striated filaments of uniform ~10nm width. Monomers interact in a staggered arrangement mediated by complementary charged electrostatic surfaces. Interacts with l(2)gd1 (via DM14 domains 1 and 3); the interaction is direct and blocks access to the surface involved in homopolymerization. This interaction may be required for the ESCRT-III complex role in multivesicular body formation. Expressed at considerably higher levels in testis than in ovary. Expressed in midgut, eye, mouthparts and male accessory gland.

The protein resides in the endosome. Its subcellular location is the multivesicular body. The protein localises to the midbody. With respect to regulation, may be regulated by aurB/Aurora kinase B-dependent phosphorylation. In terms of biological role, probable core polymerisation component of the endosomal sorting required for transport (ESCRT) III complex involved in multiple cellular processes requiring the outward bending of membranes, including vesicle budding, membrane repair and cytokinesis. The ESCRT pathway involves 4 complexes (ESCRT-0, -I, -II and -III) that sequentially assemble on the cytoplasmic side of membranes and induce membrane remodeling, budding and scission. As part of the ESCRT-III complex, involved in the budding of intraluminal vesicles (ILVs) into endosomes to form multivesicular bodies (MVBs), which target their contents for degradation via the endolysosomal pathway. Involved in regulation of signal transduction pathways, including the Notch and BMP/decapentaplegic (dpp) pathways, by sequestering the intracellular domains of activated receptors into ILVs, isolating them from the cytoplasm and targeting them for lysosomal degradation. Involved in targeting ubiquitilated proteins, such as mono-ubiquitilanated N/Notch, to MVBs for degradation. Plays a role in wing development by regulating Notch signaling. Involved in abscission of germline cells during oogenesis. Involved in spermiogenesis. Required for efficient cytoplasmic isolation and abscission during cytokinesis of epithelial sensory organ precursor cells. May be involved in septate junction remodeling and maintenance. The polypeptide is Charged multivesicular body protein 4 (Drosophila melanogaster (Fruit fly)).